The chain runs to 442 residues: Shufflon protein B (442 aa).

Residues 1–361 (MKKYDRGWAS…TGAILSCQSG (361 aa)) form a constant region region. A variable region region spans residues 362–442 (TWKSSSASIW…SYFMKITCLK (81 aa)).

In Escherichia coli, this protein is Shufflon protein B.